Here is a 191-residue protein sequence, read N- to C-terminus: Protein Ves (191 aa).

The protein belongs to the Ves family.

The sequence is that of Protein Ves from Escherichia coli (strain UTI89 / UPEC).